Reading from the N-terminus, the 177-residue chain is ATP synthase subunit delta (177 aa).

Belongs to the ATPase delta chain family. In terms of assembly, F-type ATPases have 2 components, F(1) - the catalytic core - and F(0) - the membrane proton channel. F(1) has five subunits: alpha(3), beta(3), gamma(1), delta(1), epsilon(1). F(0) has three main subunits: a(1), b(2) and c(10-14). The alpha and beta chains form an alternating ring which encloses part of the gamma chain. F(1) is attached to F(0) by a central stalk formed by the gamma and epsilon chains, while a peripheral stalk is formed by the delta and b chains.

The protein resides in the cell membrane. F(1)F(0) ATP synthase produces ATP from ADP in the presence of a proton or sodium gradient. F-type ATPases consist of two structural domains, F(1) containing the extramembraneous catalytic core and F(0) containing the membrane proton channel, linked together by a central stalk and a peripheral stalk. During catalysis, ATP synthesis in the catalytic domain of F(1) is coupled via a rotary mechanism of the central stalk subunits to proton translocation. Its function is as follows. This protein is part of the stalk that links CF(0) to CF(1). It either transmits conformational changes from CF(0) to CF(1) or is implicated in proton conduction. This chain is ATP synthase subunit delta, found in Exiguobacterium sibiricum (strain DSM 17290 / CCUG 55495 / CIP 109462 / JCM 13490 / 255-15).